Here is a 1167-residue protein sequence, read N- to C-terminus: MSDDYDPTNINAASWEEQEDYGEADGSEQYGEAEGSEQQDIQHSSEHQEAEYSVESNPNDLGDHPSQDGNTDDVGDDYDPASVVTSSVPAPPSAPAQEDSKTAPQPAAPVAKKPRTAGGFLVGDSDDEDEDGDDDGEPQQQQQQQQQQQPHQVVHKETGSGASSSGGSAPAPASASATAAPQSHSPAPQTATLTVQDNAGATTFNAPPVPQQVSHQSGATTAAVPTTPSSAAPAVDPTPVTQPAPDRVAIYEDQIRDDPRGAMNAWLELMKEKRARNDIDGARQVYERFLAIFPQAADIWVEYLDLELSLNNFPQAEGIFAKCLMTTPNVNLWTRYLDYIRRRNDLNDSTGQARQTVSQAYEFVIDNIGLDKDSGKIWAEYIQFIKFGPGTVGGSQWQDQQKMDQLRKAYQRAICVPISNVNTLWKEYDQFEMGLNKLTGRKYLSEKSPSYMSAKSANTALEHITRGLNRTNLPRLPPAPGFDGDQEFMEQVEIWKKWIAWEKSDPLDLKDDKDQPGLYQKRILYVYNQALMALRFWPEMWVDAAQWCFDNNITTVENKVTKDGNANGVEFLIRGIEANPESVLLAFKHADHIESTYPIEENDEAKIQRGEAVKAPYNKVLDTLYAMIKSLKEKEAAQIAKLQEMTAAQESKAGSDNEDGDGAADNIKKAPIEAIQKGYAAQTQLLSRMISFVWIALIRAMRRVQGKGGLNVPLGGMRKAFHDARARGRLTSDVYAAVAQLEWTIYKDPAGGKIFDRGAKLFPEDENFTLENIKYLHSRDDHTNARVLFETVVNRLTQKPELVHKAKPLYQYFHKYESQFGELAQVTKLEKRMAELFPEDPKLAAFTARYASDKFDPITARIIVSPTTQLRPKNMIMPSIEQQQPQLPMSQRDTPAAGFSPRPQGLKSPSAGPGAPFAPYAAKRPLDDRDYDDHPRKIARSEHDPFVRGASPLKGAAGRRLDQQRRMGGAAGAYSGSGAGSQVAPIARDITFLLSQIPRVEFYDSHRLNPSRMVSLLQNVKVPEYLDWKRERERMQQMQQMQGDGYGGYGGGGGGGGGGGYQGGGHARNISQDYAYRESPGPLGGRPLSPFTGGPGSRLASATAAYRQAPVGRPESSGSYEPPPAAQYGVPPPAQYDGGWAQQQQQQQYGQPPAPQGYRYGNPPPPY.

Residues 1–245 form a disordered region; sequence MSDDYDPTNI…DPTPVTQPAP (245 aa). Acidic residues-rich tracts occupy residues 16–26 and 70–79; these read EEQEDYGEADG and NTDDVGDDYD. Over residues 102 to 111 the composition is skewed to low complexity; the sequence is TAPQPAAPVA. Residues 124-137 show a composition bias toward acidic residues; the sequence is DSDDEDEDGDDDGE. Low complexity-rich tracts occupy residues 138–150 and 159–191; these read PQQQ…QQQP and GSGA…PQTA. Over residues 192–218 the composition is skewed to polar residues; sequence TLTVQDNAGATTFNAPPVPQQVSHQSG. Positions 219 to 245 are enriched in low complexity; sequence ATTAAVPTTPSSAAPAVDPTPVTQPAP. HAT repeat units follow at residues 277–309, 311–342, 352–387, 401–434, 471–504, and 518–550; these read NDID…LELS, NNFP…YIRR, QARQ…FIKF, QKMD…FEMG, TNLP…WEKS, and LYQK…WCFD. Over residues 882 to 893 the composition is skewed to polar residues; sequence QQQPQLPMSQRD. Disordered stretches follow at residues 882–980 and 1075–1167; these read QQQP…SGAG and AYRE…PPPY. Low complexity predominate over residues 908 to 922; it reads SPSAGPGAPFAPYAA. A compositionally biased stretch (basic and acidic residues) spans 924–946; that stretch reads RPLDDRDYDDHPRKIARSEHDPF. Over residues 969-979 the composition is skewed to gly residues; it reads GAAGAYSGSGA. Residues 1079–1090 are compositionally biased toward low complexity; the sequence is SPGPLGGRPLSP. Residues 1121–1134 are compositionally biased toward pro residues; it reads EPPPAAQYGVPPPA. Residues 1135–1151 show a composition bias toward low complexity; sequence QYDGGWAQQQQQQQYGQ.

It localises to the nucleus. It is found in the cytoplasm. Functionally, component of the cleavage factor IA (CFIA) complex, which is involved in the endonucleolytic cleavage during polyadenylation-dependent pre-mRNA 3'-end formation. The protein is mRNA 3'-end-processing protein rna-14 (rna-14) of Neurospora crassa (strain ATCC 24698 / 74-OR23-1A / CBS 708.71 / DSM 1257 / FGSC 987).